We begin with the raw amino-acid sequence, 88 residues long: Small ribosomal subunit protein bS16c (88 aa).

It belongs to the bacterial ribosomal protein bS16 family.

The protein localises to the plastid. The protein resides in the chloroplast. This chain is Small ribosomal subunit protein bS16c, found in Atropa belladonna (Belladonna).